Consider the following 723-residue polypeptide: Nucleolar protein 11 (723 aa).

Residue Lys346 is modified to N6-methyllysine. The disordered stretch occupies residues 549–572 (FGPEDGNCSEDSQQLNDKPADTAH).

In terms of assembly, interacts with UTP4. Interacts with FBL/fibrillarin in a transcription-dependent manner. May associate with the proposed t-UTP subcomplex of the SSU processome containing at least UTP4, WDR43, HEATR1, UTP15, WDR75.

It is found in the nucleus. The protein localises to the nucleolus. Its function is as follows. Ribosome biogenesis factor. May be required for both optimal rDNA transcription and small subunit (SSU) pre-rRNA processing at sites A', A0, 1 and 2b. This Mus musculus (Mouse) protein is Nucleolar protein 11 (Nol11).